A 208-amino-acid polypeptide reads, in one-letter code: Small ribosomal subunit protein uS4 (208 aa).

The S4 RNA-binding domain maps to 98 to 158 (RRLDNVVYRL…EKSRKIACIN (61 aa)).

The protein belongs to the universal ribosomal protein uS4 family. Part of the 30S ribosomal subunit. Contacts protein S5. The interaction surface between S4 and S5 is involved in control of translational fidelity.

One of the primary rRNA binding proteins, it binds directly to 16S rRNA where it nucleates assembly of the body of the 30S subunit. In terms of biological role, with S5 and S12 plays an important role in translational accuracy. In Geobacter sulfurreducens (strain ATCC 51573 / DSM 12127 / PCA), this protein is Small ribosomal subunit protein uS4.